The primary structure comprises 220 residues: Ribose-5-phosphate isomerase A (220 aa).

Residues 28-31, 81-84, and 94-97 each bind substrate; these read TGST, DGAD, and KGGG. Glutamate 103 functions as the Proton acceptor in the catalytic mechanism. Lysine 121 is a substrate binding site.

This sequence belongs to the ribose 5-phosphate isomerase family. Homodimer.

The catalysed reaction is aldehydo-D-ribose 5-phosphate = D-ribulose 5-phosphate. The protein operates within carbohydrate degradation; pentose phosphate pathway; D-ribose 5-phosphate from D-ribulose 5-phosphate (non-oxidative stage): step 1/1. In terms of biological role, catalyzes the reversible conversion of ribose-5-phosphate to ribulose 5-phosphate. This Shewanella baltica (strain OS185) protein is Ribose-5-phosphate isomerase A.